The sequence spans 205 residues: Dephospho-CoA kinase (205 aa).

The DPCK domain occupies 13-205 (RIGLTGGIAS…KWINTIREIL (193 aa)). 21–26 (ASGKST) is a binding site for ATP.

This sequence belongs to the CoaE family.

It localises to the cytoplasm. It carries out the reaction 3'-dephospho-CoA + ATP = ADP + CoA + H(+). The protein operates within cofactor biosynthesis; coenzyme A biosynthesis; CoA from (R)-pantothenate: step 5/5. Catalyzes the phosphorylation of the 3'-hydroxyl group of dephosphocoenzyme A to form coenzyme A. In Prochlorococcus marinus (strain MIT 9312), this protein is Dephospho-CoA kinase.